A 77-amino-acid chain; its full sequence is Acyl carrier protein (77 aa).

Positions Ser-2–Gln-77 constitute a Carrier domain. Ser-37 is modified (O-(pantetheine 4'-phosphoryl)serine).

Belongs to the acyl carrier protein (ACP) family. 4'-phosphopantetheine is transferred from CoA to a specific serine of apo-ACP by AcpS. This modification is essential for activity because fatty acids are bound in thioester linkage to the sulfhydryl of the prosthetic group.

The protein localises to the cytoplasm. It functions in the pathway lipid metabolism; fatty acid biosynthesis. Functionally, carrier of the growing fatty acid chain in fatty acid biosynthesis. The sequence is that of Acyl carrier protein from Hahella chejuensis (strain KCTC 2396).